The following is a 661-amino-acid chain: DNA ligase (661 aa).

Residues 31–35 (DKEYD), 79–80 (SL), and Glu112 each bind NAD(+). The active-site N6-AMP-lysine intermediate is the Lys114. Residues Arg135, Glu169, Lys281, and Lys305 each contribute to the NAD(+) site. The Zn(2+) site is built by Cys398, Cys401, Cys414, and Cys420. The region spanning 578–661 (QQENIFLGKT…ISEAEFEAML (84 aa)) is the BRCT domain.

Belongs to the NAD-dependent DNA ligase family. LigA subfamily. Mg(2+) serves as cofactor. Requires Mn(2+) as cofactor.

It catalyses the reaction NAD(+) + (deoxyribonucleotide)n-3'-hydroxyl + 5'-phospho-(deoxyribonucleotide)m = (deoxyribonucleotide)n+m + AMP + beta-nicotinamide D-nucleotide.. DNA ligase that catalyzes the formation of phosphodiester linkages between 5'-phosphoryl and 3'-hydroxyl groups in double-stranded DNA using NAD as a coenzyme and as the energy source for the reaction. It is essential for DNA replication and repair of damaged DNA. This chain is DNA ligase, found in Alkaliphilus oremlandii (strain OhILAs) (Clostridium oremlandii (strain OhILAs)).